A 590-amino-acid polypeptide reads, in one-letter code: Arginine--tRNA ligase (590 aa).

Positions 126 to 136 (PNVAKEMHVGH) match the 'HIGH' region motif.

This sequence belongs to the class-I aminoacyl-tRNA synthetase family. In terms of assembly, monomer.

The protein resides in the cytoplasm. It catalyses the reaction tRNA(Arg) + L-arginine + ATP = L-arginyl-tRNA(Arg) + AMP + diphosphate. The sequence is that of Arginine--tRNA ligase from Streptomyces avermitilis (strain ATCC 31267 / DSM 46492 / JCM 5070 / NBRC 14893 / NCIMB 12804 / NRRL 8165 / MA-4680).